Here is a 101-residue protein sequence, read N- to C-terminus: NAD(P)H-quinone oxidoreductase subunit 4L, chloroplastic (101 aa).

3 helical membrane passes run 2–22, 32–52, and 64–84; these read ILDS…YGLI, MSLE…SNFI, and IFIM…ILAI.

Belongs to the complex I subunit 4L family. NDH is composed of at least 16 different subunits, 5 of which are encoded in the nucleus.

Its subcellular location is the plastid. It is found in the chloroplast thylakoid membrane. The catalysed reaction is a plastoquinone + NADH + (n+1) H(+)(in) = a plastoquinol + NAD(+) + n H(+)(out). The enzyme catalyses a plastoquinone + NADPH + (n+1) H(+)(in) = a plastoquinol + NADP(+) + n H(+)(out). Its function is as follows. NDH shuttles electrons from NAD(P)H:plastoquinone, via FMN and iron-sulfur (Fe-S) centers, to quinones in the photosynthetic chain and possibly in a chloroplast respiratory chain. The immediate electron acceptor for the enzyme in this species is believed to be plastoquinone. Couples the redox reaction to proton translocation, and thus conserves the redox energy in a proton gradient. This chain is NAD(P)H-quinone oxidoreductase subunit 4L, chloroplastic, found in Chlorokybus atmophyticus (Soil alga).